A 167-amino-acid chain; its full sequence is NAD(P)H-quinone oxidoreductase subunit I, chloroplastic (167 aa).

2 4Fe-4S ferredoxin-type domains span residues 55–84 and 95–124; these read GRIHFEFDKCIACEVCVRVCPIDLPVVDWK and LNYSIDFGICIFCGNCVEYCPTNCLSMTEE. Residues Cys-64, Cys-67, Cys-70, Cys-74, Cys-104, Cys-107, Cys-110, and Cys-114 each coordinate [4Fe-4S] cluster.

This sequence belongs to the complex I 23 kDa subunit family. As to quaternary structure, NDH is composed of at least 16 different subunits, 5 of which are encoded in the nucleus. [4Fe-4S] cluster serves as cofactor.

Its subcellular location is the plastid. It is found in the chloroplast thylakoid membrane. It carries out the reaction a plastoquinone + NADH + (n+1) H(+)(in) = a plastoquinol + NAD(+) + n H(+)(out). It catalyses the reaction a plastoquinone + NADPH + (n+1) H(+)(in) = a plastoquinol + NADP(+) + n H(+)(out). In terms of biological role, NDH shuttles electrons from NAD(P)H:plastoquinone, via FMN and iron-sulfur (Fe-S) centers, to quinones in the photosynthetic chain and possibly in a chloroplast respiratory chain. The immediate electron acceptor for the enzyme in this species is believed to be plastoquinone. Couples the redox reaction to proton translocation, and thus conserves the redox energy in a proton gradient. The polypeptide is NAD(P)H-quinone oxidoreductase subunit I, chloroplastic (Aethionema grandiflorum (Persian stone-cress)).